Here is a 336-residue protein sequence, read N- to C-terminus: 4-hydroxy-3-methylbut-2-enyl diphosphate reductase (336 aa).

Cysteine 21 is a binding site for [4Fe-4S] cluster. Residues histidine 50 and histidine 86 each contribute to the (2E)-4-hydroxy-3-methylbut-2-enyl diphosphate site. Histidine 50 and histidine 86 together coordinate dimethylallyl diphosphate. Isopentenyl diphosphate is bound by residues histidine 50 and histidine 86. Cysteine 108 is a [4Fe-4S] cluster binding site. Residue histidine 136 coordinates (2E)-4-hydroxy-3-methylbut-2-enyl diphosphate. A dimethylallyl diphosphate-binding site is contributed by histidine 136. Histidine 136 is a binding site for isopentenyl diphosphate. Catalysis depends on glutamate 138, which acts as the Proton donor. Threonine 177 contributes to the (2E)-4-hydroxy-3-methylbut-2-enyl diphosphate binding site. Cysteine 207 is a binding site for [4Fe-4S] cluster. The (2E)-4-hydroxy-3-methylbut-2-enyl diphosphate site is built by serine 235, serine 236, asparagine 237, and serine 280. The dimethylallyl diphosphate site is built by serine 235, serine 236, asparagine 237, and serine 280. Isopentenyl diphosphate-binding residues include serine 235, serine 236, asparagine 237, and serine 280.

Belongs to the IspH family. [4Fe-4S] cluster is required as a cofactor.

It catalyses the reaction isopentenyl diphosphate + 2 oxidized [2Fe-2S]-[ferredoxin] + H2O = (2E)-4-hydroxy-3-methylbut-2-enyl diphosphate + 2 reduced [2Fe-2S]-[ferredoxin] + 2 H(+). The enzyme catalyses dimethylallyl diphosphate + 2 oxidized [2Fe-2S]-[ferredoxin] + H2O = (2E)-4-hydroxy-3-methylbut-2-enyl diphosphate + 2 reduced [2Fe-2S]-[ferredoxin] + 2 H(+). It functions in the pathway isoprenoid biosynthesis; dimethylallyl diphosphate biosynthesis; dimethylallyl diphosphate from (2E)-4-hydroxy-3-methylbutenyl diphosphate: step 1/1. It participates in isoprenoid biosynthesis; isopentenyl diphosphate biosynthesis via DXP pathway; isopentenyl diphosphate from 1-deoxy-D-xylulose 5-phosphate: step 6/6. Its function is as follows. Catalyzes the conversion of 1-hydroxy-2-methyl-2-(E)-butenyl 4-diphosphate (HMBPP) into a mixture of isopentenyl diphosphate (IPP) and dimethylallyl diphosphate (DMAPP). Acts in the terminal step of the DOXP/MEP pathway for isoprenoid precursor biosynthesis. This chain is 4-hydroxy-3-methylbut-2-enyl diphosphate reductase, found in Mesorhizobium japonicum (strain LMG 29417 / CECT 9101 / MAFF 303099) (Mesorhizobium loti (strain MAFF 303099)).